The following is a 1703-amino-acid chain: MNKFVSIALCSSLLGGMAFAQQTELGRNPNVRLLESTQQSVTKVQFRMDNLKFTEVQTPKGMAQVPTYTEGVNLSEKGMPTLPILSRSLAVSDTREMKVEVVSSKFIEKKNVLIAPSKGMIMRNEDPKKIPYVYGKSYSQNKFFPGEIATLDDPFILRDVRGQVVNFAPLQYNPVTKTLRIYTEITVAVSETSEQGKNILNKKGTFAGFEDTYKRMFMNYEPGRYTPVEEKQNGRMIVIVAKKYEGDIKDFVDWKNQRGLRTEVKVAEDIASPVTANAIQQFVKQEYEKEGNDLTYVLLVGDHKDIPAKITPGIKSDQVYGQIVGNDHYNEVFIGRFSCESKEDLKTQIDRTIHYERNITTEDKWLGQALCIASAEGGPSADNGESDIQHENVIANLLTQYGYTKIIKCYDPGVTPKNIIDAFNGGISLVNYTGHGSETAWGTSHFGTTHVKQLTNSNQLPFIFDVACVNGDFLFSMPCFAEALMRAQKDGKPTGTVAIIASTINQSWASPMRGQDEMNEILCEKHPNNIKRTFGGVTMNGMFAMVEKYKKDGEKMLDTWTVFGDPSLLVRTLVPTKMQVTAPAQINLTDASVNVSCDYNGAIATISANGKMFGSAVVENGTATINLTGLTNESTLTLTVVGYNKETVIKTINTNGEPNPYQPVSNLTATTQGQKVTLKWDAPSTKTNATTNTARSVDGIRELVLLSVSDAPELLRSGQAEIVLEAHDVWNDGSGYQILLDADHDQYGQVIPSDTHTLWPNCSVPANLFAPFEYTVPENADPSCSPTNMIMDGTASVNIPAGTYDFAIAAPQANAKIWIAGQGPTKEDDYVFEAGKKYHFLMKKMGSGDGTELTISEGGGSDYTYTVYRDGTKIKEGLTATTFEEDGVATGNHEYCVEVKYTAGVSPKVCKDVTVEGSNEFAPVQNLTGSAVGQKVTLKWDAPNGTPNPNPNPNPNPNPGTTTLSESFENGIPASWKTIDADGDGHGWKPGNAPGIAGYNSNGCVYSESFGLGGIGVLTPDNYLITPALDLPNGGKLTFWVCAQDANYASEHYAVYASSTGNDASNFTNALLEETITAKGVRSPEAIRGRIQGTWRQKTVDLPAGTKYVAFRHFQSTDMFYIDLDEVEIKANGKRADFTETFESSTHGEAPAEWTTIDADGDGQGWLCLSSGQLDWLTAHGGTNVVASFSWNGMALNPDNYLISKDVTGATKVKYYYAVNDGFPGDHYAVMISKTGTNAGDFTVVFEETPNGINKGGARFGLSTEANGAKPQSVWIERTVDLPAGTKYVAFRHYNCSDLNYILLDDIQFTMGGSPTPTDYTYTVYRDGTKIKEGLTETTFEEDGVATGNHEYCVEVKYTAGVSPKECVNVTINPTQFNPVKNLKAQPDGGDVVLKWEAPSAKKTEGSREVKRIGDGLFVTIEPANDVRANEAKVVLAADNVWGDNTGYQFLLDADHNTFGSVIPATGPLFTGTASSNLYSANFEYLIPANADPVVTTQNIIVTGQGEVVIPGGVYDYCITNPEPASGKMWIAGDGGNQPARYDDFTFEAGKKYTFTMRRAGMGDGTDMEVEDDSPASYTYTVYRDGTKIKEGLTETTYRDAGMSAQSHEYCVEVKYAAGVSPKVCVDYIPDGVADVTAQKPYTLTVVGKTITVTCQGEAMIYDMNGRRLAAGRNTVVYTAQGGYYAVMVVVDGKSYVEKLAVK.

The signal sequence occupies residues 1–20 (MNKFVSIALCSSLLGGMAFA). Residues 21–224 (QQTELGRNPN…RMFMNYEPGR (204 aa)) constitute a propeptide that is removed on maturation. Positions 302, 324, 327, 329, 331, 385, and 390 each coordinate Ca(2+). His435 (proton donor) is an active-site residue. The active-site Nucleophile is the Cys468. Residues Phe473, Glu482, Asp516, Glu517, Glu520, and His526 each coordinate Ca(2+). The segment at 940-968 (WDAPNGTPNPNPNPNPNPNPGTTTLSESF) is disordered. The span at 946–958 (TPNPNPNPNPNPN) shows a compositional bias: pro residues.

This sequence belongs to the peptidase C25 family.

The protein localises to the secreted. It carries out the reaction Hydrolysis of proteins and small molecule substrates, with a preference for Arg in P1.. In terms of biological role, thiol protease. Acts synergistically with RgpB to catalyze the maturation of fimbrial subunits, such as FimA. Its proteolytic activity is a major factor in both periodontal tissue destruction and in evasion of host defense mechanisms. In Porphyromonas gingivalis (strain ATCC 33277 / DSM 20709 / CIP 103683 / JCM 12257 / NCTC 11834 / 2561), this protein is Gingipain R1.